The chain runs to 473 residues: Adenosylhomocysteinase (473 aa).

Residues T64, D139, and E199 each contribute to the substrate site. T200–T202 provides a ligand contact to NAD(+). Residues K229 and D233 each contribute to the substrate site. NAD(+)-binding positions include N234, G263–G268, E286, N321, I342–H344, and N387.

Belongs to the adenosylhomocysteinase family. NAD(+) serves as cofactor.

Its subcellular location is the cytoplasm. It carries out the reaction S-adenosyl-L-homocysteine + H2O = L-homocysteine + adenosine. It functions in the pathway amino-acid biosynthesis; L-homocysteine biosynthesis; L-homocysteine from S-adenosyl-L-homocysteine: step 1/1. Functionally, may play a key role in the regulation of the intracellular concentration of adenosylhomocysteine. The protein is Adenosylhomocysteinase of Burkholderia mallei (strain SAVP1).